A 23-amino-acid polypeptide reads, in one-letter code: Melittin-related peptide AK-23-1 (23 aa).

Lys-23 carries the post-translational modification Lysine amide.

Expressed by the skin glands.

The protein localises to the secreted. In Rana arvalis (Moor frog), this protein is Melittin-related peptide AK-23-1.